A 117-amino-acid chain; its full sequence is Small ribosomal subunit protein bS18c (117 aa).

A disordered region spans residues Ser-86–Phe-117.

This sequence belongs to the bacterial ribosomal protein bS18 family. Part of the 30S ribosomal subunit.

It is found in the plastid. The polypeptide is Small ribosomal subunit protein bS18c (Cuscuta exaltata (Tall dodder)).